A 574-amino-acid polypeptide reads, in one-letter code: M-phase inducer phosphatase 2 (574 aa).

2 disordered regions span residues 31-51 (GFGF…SSSP) and 90-110 (RRTS…AGLC). Ser42 bears the Phosphoserine mark. Residues 90–105 (RRTSECSLSSESSESS) show a composition bias toward low complexity. Ser166 is subject to Phosphoserine; by MELK. The residue at position 246 (Ser246) is a Phosphoserine. Ser319 carries the post-translational modification Phosphoserine; by MAPKAPK2 and MELK. Ser319 is modified (phosphoserine; by MELK and MAPK14). Residues 339–359 (DVPVLSKRRKSGTPLEEQQLE) are disordered. Ser349 is modified (phosphoserine; by AURKA). Ser370 carries the phosphoserine; by BRSK1 and MAPK14 modification. A Rhodanese domain is found at 425-532 (IVEKFVIVDC…FFPQHPNFCE (108 aa)). The active site involves Cys481. Ser557 bears the Phosphoserine mark.

Belongs to the MPI phosphatase family. Interacts with MAPK14 and 14-3-3 proteins. In terms of processing, phosphorylated by BRSK1 in vitro. Phosphorylated by CHEK1, which inhibits the activity of this protein. Phosphorylation at Ser-349 by AURKA might locally participate in the control of the onset of mitosis. Phosphorylation by MELK at Ser-166 promotes localization to the centrosome and the spindle poles during mitosis. Phosphorylation at Ser-319 and Ser-370 by MAPK14 is required for binding to 14-3-3 proteins.

Its subcellular location is the cytoplasm. It localises to the cytoskeleton. The protein localises to the microtubule organizing center. It is found in the centrosome. The protein resides in the spindle pole. The enzyme catalyses O-phospho-L-tyrosyl-[protein] + H2O = L-tyrosyl-[protein] + phosphate. Its activity is regulated as follows. Stimulated by B-type cyclins. In terms of biological role, tyrosine protein phosphatase which functions as a dosage-dependent inducer of mitotic progression. Directly dephosphorylates CDK1 and stimulates its kinase activity. Required for G2/M phases of the cell cycle progression and abscission during cytokinesis in a ECT2-dependent manner. The three isoforms seem to have a different level of activity. The polypeptide is M-phase inducer phosphatase 2 (Cdc25b) (Rattus norvegicus (Rat)).